The primary structure comprises 365 residues: Flagellar P-ring protein (365 aa).

An N-terminal signal peptide occupies residues 1-19; sequence MMLSLCAIAGLLLAPSIQA.

It belongs to the FlgI family. In terms of assembly, the basal body constitutes a major portion of the flagellar organelle and consists of four rings (L,P,S, and M) mounted on a central rod.

It localises to the periplasm. Its subcellular location is the bacterial flagellum basal body. In terms of biological role, assembles around the rod to form the L-ring and probably protects the motor/basal body from shearing forces during rotation. In Sodalis glossinidius (strain morsitans), this protein is Flagellar P-ring protein.